The following is a 294-amino-acid chain: Acetyl-coenzyme A carboxylase carboxyl transferase subunit beta (294 aa).

Residues 27 to 294 (LWHKCPSCDA…PSPVALPVTA (268 aa)) form the CoA carboxyltransferase N-terminal domain. Residues Cys-31, Cys-34, Cys-50, and Cys-53 each contribute to the Zn(2+) site. The C4-type zinc finger occupies 31-53 (CPSCDAVLYRPELEKTLDVCPKC).

The protein belongs to the AccD/PCCB family. Acetyl-CoA carboxylase is a heterohexamer composed of biotin carboxyl carrier protein (AccB), biotin carboxylase (AccC) and two subunits each of ACCase subunit alpha (AccA) and ACCase subunit beta (AccD). The cofactor is Zn(2+).

It is found in the cytoplasm. It catalyses the reaction N(6)-carboxybiotinyl-L-lysyl-[protein] + acetyl-CoA = N(6)-biotinyl-L-lysyl-[protein] + malonyl-CoA. The protein operates within lipid metabolism; malonyl-CoA biosynthesis; malonyl-CoA from acetyl-CoA: step 1/1. Component of the acetyl coenzyme A carboxylase (ACC) complex. Biotin carboxylase (BC) catalyzes the carboxylation of biotin on its carrier protein (BCCP) and then the CO(2) group is transferred by the transcarboxylase to acetyl-CoA to form malonyl-CoA. This Ectopseudomonas mendocina (strain ymp) (Pseudomonas mendocina) protein is Acetyl-coenzyme A carboxylase carboxyl transferase subunit beta.